A 295-amino-acid chain; its full sequence is Glycine N-acyltransferase-like protein Keg1 (295 aa).

Lysine 41 carries the post-translational modification N6-acetyllysine; alternate. Lysine 41 bears the N6-succinyllysine; alternate mark. Lysine 43 is modified (N6-acetyllysine). Lysine 48 is modified (N6-acetyllysine; alternate). At lysine 48 the chain carries N6-succinyllysine; alternate. N6-acetyllysine occurs at positions 80 and 83. Residues lysine 124, lysine 128, and lysine 140 each carry the N6-acetyllysine; alternate modification. N6-succinyllysine; alternate occurs at positions 124, 128, and 140. An N6-acetyllysine modification is found at lysine 150. The residue at position 255 (lysine 255) is an N6-acetyllysine; alternate. Residue lysine 255 is modified to N6-succinyllysine; alternate.

It belongs to the glycine N-acyltransferase family. In terms of assembly, binds to microtubules. As to expression, specifically expressed in kidney and liver. Up-regulated in the regenerating liver as well as in hepatocellular carcinoma.

It localises to the cytoplasm. The protein localises to the cytoskeleton. The protein resides in the microtubule organizing center. Its subcellular location is the centrosome. The catalysed reaction is an acyl-CoA + glycine = an N-acylglycine + CoA + H(+). In terms of biological role, acyltransferase which transfers the acyl group to the N-terminus of glycine. Can conjugate a multitude of substrates to form a variety of N-acylglycines. This Rattus norvegicus (Rat) protein is Glycine N-acyltransferase-like protein Keg1 (Keg1).